Here is a 644-residue protein sequence, read N- to C-terminus: MSSIIQLLPDHVANQIAAGEVVQRPASVVKELLENAVDAKATDIKLIIKDAGKSLVQVIDNGVGMTVTDARLCFARHATSKIRQAEDLFSLGTKGFRGEALASIAAIAHMEMKTKQEQDELGTHIVIEGSKFVSQEVAVLPKGTSFAVKNLFFNIPARRNFLKSDTVEFRHVMDEFQRVALAHPNIHFSFYHNGSELYNLPAAGYRQRIVGIMSGKTNEKLVPVNEDTEIISIQGFVCKPEFAKKNRGEQFFFVNDRFIKSGYLHHAVMAAYDGLLKDGSQPSYFLYLQVPPNTIDINIHPTKTEIKFDDEQALYAILRASIKHSLGQFNVAPVLDFDRDSNLDTPYHYKDVEAEVPTIQVDGTFNPFTDDKTNQHYTKAGSGSGSGYSSGSSSSSGSGSGSSYSGYSKRVEPTVSWESLYVGLDTENPETIESSPFIFENEEVTSSLFNDDEVEQASQKTYQIHKKYIVSPIKSGMVIVDQHRAHQRILYEQFLLNMTVNQASSQQLLFPLDLFYSSSEMKLIEELKPSLETTGFVFEEAQTDHVVISGIPVNITESEVSLVIEQLLSDLQDGIPASSYSQNDTIAKSMAKSLAVKTGSYLTEKEQDNLVNGLFACKDPNISPFQKPTFITMRVEDIDKKFAL.

Residues 363-405 are disordered; sequence GTFNPFTDDKTNQHYTKAGSGSGSGYSSGSSSSSGSGSGSSYS. A compositionally biased stretch (low complexity) spans 389 to 405; it reads SSGSSSSSGSGSGSSYS.

The protein belongs to the DNA mismatch repair MutL/HexB family.

Its function is as follows. This protein is involved in the repair of mismatches in DNA. It is required for dam-dependent methyl-directed DNA mismatch repair. May act as a 'molecular matchmaker', a protein that promotes the formation of a stable complex between two or more DNA-binding proteins in an ATP-dependent manner without itself being part of a final effector complex. This Flavobacterium johnsoniae (strain ATCC 17061 / DSM 2064 / JCM 8514 / BCRC 14874 / CCUG 350202 / NBRC 14942 / NCIMB 11054 / UW101) (Cytophaga johnsonae) protein is DNA mismatch repair protein MutL.